A 364-amino-acid polypeptide reads, in one-letter code: tRNA 2-selenouridine synthase (364 aa).

A Rhodanese domain is found at 14–137; the sequence is LIADTPIIDV…LRQTTIQATI (124 aa). Cysteine 97 (S-selanylcysteine intermediate) is an active-site residue.

This sequence belongs to the SelU family. Monomer.

It carries out the reaction 5-methylaminomethyl-2-thiouridine(34) in tRNA + selenophosphate + (2E)-geranyl diphosphate + H2O + H(+) = 5-methylaminomethyl-2-selenouridine(34) in tRNA + (2E)-thiogeraniol + phosphate + diphosphate. It catalyses the reaction 5-methylaminomethyl-2-thiouridine(34) in tRNA + (2E)-geranyl diphosphate = 5-methylaminomethyl-S-(2E)-geranyl-thiouridine(34) in tRNA + diphosphate. The catalysed reaction is 5-methylaminomethyl-S-(2E)-geranyl-thiouridine(34) in tRNA + selenophosphate + H(+) = 5-methylaminomethyl-2-(Se-phospho)selenouridine(34) in tRNA + (2E)-thiogeraniol. The enzyme catalyses 5-methylaminomethyl-2-(Se-phospho)selenouridine(34) in tRNA + H2O = 5-methylaminomethyl-2-selenouridine(34) in tRNA + phosphate. Involved in the post-transcriptional modification of the uridine at the wobble position (U34) of tRNA(Lys), tRNA(Glu) and tRNA(Gln). Catalyzes the conversion of 2-thiouridine (S2U-RNA) to 2-selenouridine (Se2U-RNA). Acts in a two-step process involving geranylation of 2-thiouridine (S2U) to S-geranyl-2-thiouridine (geS2U) and subsequent selenation of the latter derivative to 2-selenouridine (Se2U) in the tRNA chain. The protein is tRNA 2-selenouridine synthase of Escherichia coli O139:H28 (strain E24377A / ETEC).